The sequence spans 141 residues: Transcription antitermination protein NusB (141 aa).

It belongs to the NusB family.

Its function is as follows. Involved in transcription antitermination. Required for transcription of ribosomal RNA (rRNA) genes. Binds specifically to the boxA antiterminator sequence of the ribosomal RNA (rrn) operons. This is Transcription antitermination protein NusB from Neisseria meningitidis serogroup C (strain 053442).